The primary structure comprises 343 residues: Phenylalanine--tRNA ligase alpha subunit (343 aa).

Glu258 is a Mg(2+) binding site.

The protein belongs to the class-II aminoacyl-tRNA synthetase family. Phe-tRNA synthetase alpha subunit type 1 subfamily. In terms of assembly, tetramer of two alpha and two beta subunits. Mg(2+) is required as a cofactor.

It is found in the cytoplasm. It catalyses the reaction tRNA(Phe) + L-phenylalanine + ATP = L-phenylalanyl-tRNA(Phe) + AMP + diphosphate + H(+). The protein is Phenylalanine--tRNA ligase alpha subunit of Symbiobacterium thermophilum (strain DSM 24528 / JCM 14929 / IAM 14863 / T).